A 76-amino-acid polypeptide reads, in one-letter code: Protein TraJ (76 aa).

It localises to the cytoplasm. Its function is as follows. This protein is essential for positively regulating the expression of transfer genes that are involved in the conjugal transfer of DNA between bacterial cells. The sequence is that of Protein TraJ (traJ) from Escherichia coli.